The chain runs to 446 residues: Inward rectifier potassium channel 4 (446 aa).

Residues 1 to 55 lie on the Cytoplasmic side of the membrane; that stretch reads MHGHSRNGQAHVPRRKRRNRFVKKNGQCNVYFANLSNKSQRYMADIFTTCVDTRW. A helical transmembrane segment spans residues 56 to 80; it reads RYMLMIFSAAFLVSWLFFGLLFWCI. Residues 81–120 lie on the Extracellular side of the membrane; it reads AFFHGDLEPSPSGPTAGGPGGNGGGAAPTAAKPCIMHVNG. The tract at residues 91 to 111 is val/Gly/Ala/Pro stretch; the sequence is PSGPTAGGPGGNGGGAAPTAA. Positions 121 to 132 form an intramembrane region, helical; Pore-forming; sequence FLGAFLFSVETQ. An intramembrane region (pore-forming) is located at residues 133–139; it reads TTIGYGF. The short motif at 134 to 139 is the Selectivity filter element; sequence TIGYGF. Residues 140 to 148 are Extracellular-facing; it reads RCVTEECPL. A helical transmembrane segment spans residues 149 to 170; that stretch reads AVIAVVVQSIVGCVIDSFMIGT. Residues 171–446 lie on the Cytoplasmic side of the membrane; it reads IMAKMPRPKK…NISYRRESAI (276 aa). Residues 444-446 carry the PDZ-binding motif; it reads SAI.

It belongs to the inward rectifier-type potassium channel (TC 1.A.2.1) family. KCNJ4 subfamily. Homomultimeric and heteromultimeric association with KCNJ2 and KCNJ12. Interacts with DLG2 and DLG4. Associates, via its PDZ-recognition domain, with a complex containing LIN7A, LIN7B, LIN7C, DLG1, CASK and APBA1. Interacts with TAX1BP3. TAX1BP3 competes with LIN7 family members for KCNJ4 binding. As to expression, detected in kidney distal convoluted tubules (at protein level). Widely expressed throughout the brain. Also found in some peripheral tissues.

It localises to the cell membrane. The protein resides in the cytoplasmic vesicle membrane. It is found in the postsynaptic cell membrane. It carries out the reaction K(+)(in) = K(+)(out). Inward rectifier potassium channels are characterized by a greater tendency to allow potassium to flow into the cell rather than out of it. Their voltage dependence is regulated by the concentration of extracellular potassium; as external potassium is raised, the voltage range of the channel opening shifts to more positive voltages. The inward rectification is mainly due to the blockage of outward current by internal magnesium. Can be blocked by extracellular barium and cesium. This Rattus norvegicus (Rat) protein is Inward rectifier potassium channel 4 (Kcnj4).